Reading from the N-terminus, the 197-residue chain is Amino-terminal enhancer of split (197 aa).

Low complexity predominate over residues 1–15; the sequence is MMFPQSSSRHSGSSH. Disordered stretches follow at residues 1–20 and 169–197; these read MMFP…PQQL and LGSQ…DKSD. Positions 166 to 197 are CCN domain; it reads LSALGSQGHLPKEDKNGHEGDRRPDDDGDKSD. The segment covering 175–197 has biased composition (basic and acidic residues); it reads LPKEDKNGHEGDRRPDDDGDKSD.

It belongs to the WD repeat Groucho/TLE family. Monomer. In terms of processing, ubiquitinated by XIAP/BIRC4. In terms of tissue distribution, predominantly expressed in brain, testis and ovary. Ubiquitously expressed in the developing embryo. Present in unfertilized and fertilized eggs.

It is found in the nucleus. Its function is as follows. May act as a transcriptional corepressor. Has a possible role in the negative regulation of proteins containing WD-40 repeats. May be required for the initiation and maintenance of the differentiated state. In Xenopus laevis (African clawed frog), this protein is Amino-terminal enhancer of split (aes).